Here is a 384-residue protein sequence, read N- to C-terminus: UPF0284 protein alr0297 (384 aa).

Belongs to the UPF0284 family.

The chain is UPF0284 protein alr0297 from Nostoc sp. (strain PCC 7120 / SAG 25.82 / UTEX 2576).